The primary structure comprises 361 residues: G-protein coupled receptor 183 (361 aa).

The Extracellular portion of the chain corresponds to M1–R31. The chain crosses the membrane as a helical span at residues I32–V57. Topologically, residues Q58 to D77 are cytoplasmic. The helical transmembrane segment at I78 to F95 threads the bilayer. Residue R87 participates in 7alpha,25-dihydroxycholesterol binding. Residues D96–R105 lie on the Extracellular side of the membrane. C104 and C181 are disulfide-bonded. Residues I106–I127 form a helical membrane-spanning segment. Residues Y112 and Y116 each coordinate 7alpha,25-dihydroxycholesterol. The interaction with G proteins stretch occupies residues S126–V134. At D128–K149 the chain is on the cytoplasmic side. Residues G150–I168 form a helical membrane-spanning segment. The Extracellular segment spans residues N169 to S192. A helical transmembrane segment spans residues L193–C215. The Cytoplasmic portion of the chain corresponds to Y216–K241. The helical transmembrane segment at A242–I265 threads the bilayer. Position 260 (Y260) interacts with 7alpha,25-dihydroxycholesterol. The Extracellular portion of the chain corresponds to Q266–Q287. A helical transmembrane segment spans residues I288–C312. The Cytoplasmic portion of the chain corresponds to K313–K361. Residue S328 is modified to Phosphoserine. Positions E340–K361 are disordered. Polar residues predominate over residues E348 to K361.

It belongs to the G-protein coupled receptor 1 family. As to quaternary structure, homodimer and heterodimer. Heterodimerizes with CXCR5; leading to modulate the interaction between of CXCL13 and CXCR5. As to expression, expressed abundantly in lymphoid tissues such as spleen and lymph node, and in B- and T-lymphocytes. Also highly expressed in lung, heart and gastrointestinal tract, and weakly expressed in the urogenital system and brain. Expressed in astrocytes.

Its subcellular location is the cell membrane. Its function is as follows. G-protein coupled receptor expressed in lymphocytes that acts as a chemotactic receptor for B-cells, T-cells, splenic dendritic cells, monocytes/macrophages and astrocytes. Receptor for oxysterol 7-alpha,25-dihydroxycholesterol (7-alpha,25-OHC) and other related oxysterols. Mediates cell positioning and movement of a number of cells by binding the 7-alpha,25-OHC ligand that forms a chemotactic gradient. Binding of 7-alpha,25-OHC mediates the correct localization of B-cells during humoral immune responses. Guides B-cell movement along the B-cell zone-T-cell zone boundary and later to interfollicular and outer follicular regions. Its specific expression during B-cell maturation helps position B-cells appropriately for mounting T-dependent antibody responses. Collaborates with CXCR5 to mediate B-cell migration; probably by forming a heterodimer with CXCR5 that affects the interaction between of CXCL13 and CXCR5. Also acts as a chemotactic receptor for some T-cells upon binding to 7-alpha,25-OHC ligand. Promotes follicular helper T (Tfh) cells differentiation by positioning activated T-cells at the follicle-T-zone interface, promoting contact of newly activated CD4 T-cells with activated dendritic cells and exposing them to Tfh-cell-promoting inducible costimulator (ICOS) ligand. Expression in splenic dendritic cells is required for their homeostasis, localization and ability to induce B- and T-cell responses: GPR183 acts as a chemotactic receptor in dendritic cells that mediates the accumulation of CD4(+) dendritic cells in bridging channels. Regulates migration of astrocytes and is involved in communication between astrocytes and macrophages. Promotes osteoclast precursor migration to bone surfaces. Signals constitutively through G(i)-alpha, but not G(s)-alpha or G(q)-alpha. Signals constitutively also via MAPK1/3 (ERK1/2). This is G-protein coupled receptor 183 from Homo sapiens (Human).